The following is a 345-amino-acid chain: UPF0324 membrane protein CTC_01844 (345 aa).

Helical transmembrane passes span 7–24 (YSVGILFTAVLAVISGFI), 28–50 (IPYRLIGAGVFALLIGMFLNPIV), 70–87 (LAIILMGITLSFSQVLEV), 91–113 (SLIVMVFTLITAFGGGYLLGKLF), 120–142 (SGLISAGTGICGGSAIAAISPVI), 152–174 (AISATFIFDVIMVILFPIAGKYF), 181–203 (YGLWAGTAVNDTSSVVAAGYAFS), 209–231 (FSVIVKLTRTLSIVPVVLIFSYI), 261–283 (IFPWFILLFLVMVAIKSTGIIPN), and 316–338 (SGFAPAVHGFIISLLVVVVSFLV).

This sequence belongs to the UPF0324 family.

The protein localises to the cell membrane. This chain is UPF0324 membrane protein CTC_01844, found in Clostridium tetani (strain Massachusetts / E88).